A 166-amino-acid polypeptide reads, in one-letter code: NAD(P)H-quinone oxidoreductase subunit I, chloroplastic (166 aa).

4Fe-4S ferredoxin-type domains are found at residues G55 to K84 and L95 to E124. Residues C64, C67, C70, C74, C104, C107, C110, and C114 each coordinate [4Fe-4S] cluster.

It belongs to the complex I 23 kDa subunit family. In terms of assembly, NDH is composed of at least 16 different subunits, 5 of which are encoded in the nucleus. [4Fe-4S] cluster serves as cofactor.

Its subcellular location is the plastid. It localises to the chloroplast thylakoid membrane. The catalysed reaction is a plastoquinone + NADH + (n+1) H(+)(in) = a plastoquinol + NAD(+) + n H(+)(out). The enzyme catalyses a plastoquinone + NADPH + (n+1) H(+)(in) = a plastoquinol + NADP(+) + n H(+)(out). In terms of biological role, NDH shuttles electrons from NAD(P)H:plastoquinone, via FMN and iron-sulfur (Fe-S) centers, to quinones in the photosynthetic chain and possibly in a chloroplast respiratory chain. The immediate electron acceptor for the enzyme in this species is believed to be plastoquinone. Couples the redox reaction to proton translocation, and thus conserves the redox energy in a proton gradient. The chain is NAD(P)H-quinone oxidoreductase subunit I, chloroplastic from Oxypappus scaber.